The sequence spans 138 residues: Small ribosomal subunit protein uS12 (138 aa).

Residues 1–20 (MPTISQLINHGRSAKTSKSK) are disordered. Residue aspartate 102 is modified to 3-methylthioaspartic acid. The tract at residues 116 to 138 (DAAGVDKRKQGRSIYGTKKPKEN) is disordered.

The protein belongs to the universal ribosomal protein uS12 family. As to quaternary structure, part of the 30S ribosomal subunit. Contacts proteins S8 and S17. May interact with IF1 in the 30S initiation complex.

In terms of biological role, with S4 and S5 plays an important role in translational accuracy. Functionally, interacts with and stabilizes bases of the 16S rRNA that are involved in tRNA selection in the A site and with the mRNA backbone. Located at the interface of the 30S and 50S subunits, it traverses the body of the 30S subunit contacting proteins on the other side and probably holding the rRNA structure together. The combined cluster of proteins S8, S12 and S17 appears to hold together the shoulder and platform of the 30S subunit. The chain is Small ribosomal subunit protein uS12 from Metamycoplasma arthritidis (strain 158L3-1) (Mycoplasma arthritidis).